The following is a 363-amino-acid chain: Adenosine deaminase (363 aa).

Alanine 2 is subject to N-acetylalanine. Positions 15 and 17 each coordinate Zn(2+). Substrate is bound by residues histidine 17 and aspartate 19. The residue at position 54 (lysine 54) is an N6-acetyllysine. Residue glycine 184 coordinates substrate. Histidine 214 serves as a coordination point for Zn(2+). Glutamate 217 functions as the Proton donor in the catalytic mechanism. An N6-acetyllysine modification is found at lysine 232. Residue aspartate 295 participates in Zn(2+) binding. Substrate is bound at residue aspartate 296.

Belongs to the metallo-dependent hydrolases superfamily. Adenosine and AMP deaminases family. Interacts with DPP4 (via extracellular domain). Interacts with PLG (via Kringle 4 domain); the interaction stimulates PLG activation when in complex with DPP4. The cofactor is Zn(2+). As to expression, expressed in gastrointestinal tissues (at protein level).

The protein localises to the cell membrane. It is found in the cell junction. The protein resides in the cytoplasmic vesicle lumen. Its subcellular location is the cytoplasm. It localises to the lysosome. The catalysed reaction is adenosine + H2O + H(+) = inosine + NH4(+). It carries out the reaction 2'-deoxyadenosine + H2O + H(+) = 2'-deoxyinosine + NH4(+). The enzyme catalyses cordycepin + H2O + H(+) = 3'-deoxyinosine + NH4(+). Functionally, catalyzes the hydrolytic deamination of adenosine and 2-deoxyadenosine. Plays an important role in purine metabolism and in adenosine homeostasis. Modulates signaling by extracellular adenosine, and so contributes indirectly to cellular signaling events. Acts as a positive regulator of T-cell coactivation, by binding DPP4. Its interaction with DPP4 regulates lymphocyte-epithelial cell adhesion. Enhances dendritic cell immunogenicity by affecting dendritic cell costimulatory molecule expression and cytokines and chemokines secretion. Enhances CD4+ T-cell differentiation and proliferation. Acts as a positive modulator of adenosine receptors ADORA1 and ADORA2A, by enhancing their ligand affinity via conformational change. Stimulates plasminogen activation. Plays a role in male fertility. Plays a protective role in early postimplantation embryonic development. Also responsible for the deamination of cordycepin (3'-deoxyadenosine), a fungal natural product that shows antitumor, antibacterial, antifungal, antivirus, and immune regulation properties. The sequence is that of Adenosine deaminase (ADA) from Bos taurus (Bovine).